The sequence spans 401 residues: Probable inactive purple acid phosphatase 14 (401 aa).

The first 30 residues, 1-30, serve as a signal peptide directing secretion; sequence MEETRRRFVISSVLSVSLIYLCLSTCHVSA. A glycan (N-linked (GlcNAc...) asparagine) is linked at Asn79. Asn197 contacts substrate. Zn(2+) is bound at residue Asn197. The N-linked (GlcNAc...) asparagine glycan is linked to Asn246. His256 lines the Zn(2+) pocket. N-linked (GlcNAc...) asparagine glycosylation occurs at Asn266. Residue His305 coordinates Zn(2+). Residue 305-307 participates in substrate binding; sequence HDH. His307 is a Fe cation binding site. N-linked (GlcNAc...) asparagine glycans are attached at residues Asn371 and Asn384.

It belongs to the metallophosphoesterase superfamily. Purple acid phosphatase family. In terms of assembly, homodimer. The cofactor is Fe cation. Requires Zn(2+) as cofactor. In terms of tissue distribution, specifically expressed in flowers.

It localises to the secreted. The sequence is that of Probable inactive purple acid phosphatase 14 (PAP14) from Arabidopsis thaliana (Mouse-ear cress).